Consider the following 1025-residue polypeptide: Error-prone DNA polymerase (1025 aa).

Belongs to the DNA polymerase type-C family. DnaE2 subfamily.

The protein localises to the cytoplasm. It catalyses the reaction DNA(n) + a 2'-deoxyribonucleoside 5'-triphosphate = DNA(n+1) + diphosphate. Functionally, DNA polymerase involved in damage-induced mutagenesis and translesion synthesis (TLS). It is not the major replicative DNA polymerase. This is Error-prone DNA polymerase from Alkalilimnicola ehrlichii (strain ATCC BAA-1101 / DSM 17681 / MLHE-1).